A 334-amino-acid polypeptide reads, in one-letter code: Trans-3-hydroxy-L-proline dehydratase (334 aa).

C91 (proton acceptor) is an active-site residue. Substrate is bound by residues 92–93 (GH), D250, and 255–256 (GT).

It belongs to the proline racemase family.

It carries out the reaction trans-3-hydroxy-L-proline = 1-pyrroline-2-carboxylate + H2O. Catalyzes the dehydration of trans-3-hydroxy-L-proline (t3LHyp) to Delta(1)-pyrroline-2-carboxylate (Pyr2C). Is likely involved in a degradation pathway that converts t3LHyp to L-proline. Can also catalyze the epimerization of trans-4-hydroxy-L-proline (t4LHyp) to cis-4-hydroxy-D-proline (c4DHyp) in vitro. Displays no proline racemase activity. The sequence is that of Trans-3-hydroxy-L-proline dehydratase from Bacillus thuringiensis subsp. konkukian (strain 97-27).